The primary structure comprises 123 residues: Phosphoribosyl-AMP cyclohydrolase (123 aa).

Position 76 (Asp-76) interacts with Mg(2+). Cys-77 is a binding site for Zn(2+). 2 residues coordinate Mg(2+): Asp-78 and Asp-80. Zn(2+) contacts are provided by Cys-93 and Cys-100.

It belongs to the PRA-CH family. In terms of assembly, homodimer. The cofactor is Mg(2+). Zn(2+) serves as cofactor.

The protein localises to the cytoplasm. It catalyses the reaction 1-(5-phospho-beta-D-ribosyl)-5'-AMP + H2O = 1-(5-phospho-beta-D-ribosyl)-5-[(5-phospho-beta-D-ribosylamino)methylideneamino]imidazole-4-carboxamide. Its pathway is amino-acid biosynthesis; L-histidine biosynthesis; L-histidine from 5-phospho-alpha-D-ribose 1-diphosphate: step 3/9. In terms of biological role, catalyzes the hydrolysis of the adenine ring of phosphoribosyl-AMP. This chain is Phosphoribosyl-AMP cyclohydrolase, found in Methanocorpusculum labreanum (strain ATCC 43576 / DSM 4855 / Z).